The sequence spans 197 residues: UPF0725 protein At5g41640 (197 aa).

It belongs to the UPF0725 (EMB2204) family.

The protein is UPF0725 protein At5g41640 of Arabidopsis thaliana (Mouse-ear cress).